The sequence spans 161 residues: S-ribosylhomocysteine lyase (161 aa).

H57, H61, and C124 together coordinate Fe cation.

Belongs to the LuxS family. In terms of assembly, homodimer. Fe cation is required as a cofactor.

It carries out the reaction S-(5-deoxy-D-ribos-5-yl)-L-homocysteine = (S)-4,5-dihydroxypentane-2,3-dione + L-homocysteine. Involved in the synthesis of autoinducer 2 (AI-2) which is secreted by bacteria and is used to communicate both the cell density and the metabolic potential of the environment. The regulation of gene expression in response to changes in cell density is called quorum sensing. Catalyzes the transformation of S-ribosylhomocysteine (RHC) to homocysteine (HC) and 4,5-dihydroxy-2,3-pentadione (DPD). In Macrococcus caseolyticus (strain JCSC5402) (Macrococcoides caseolyticum), this protein is S-ribosylhomocysteine lyase.